The sequence spans 246 residues: uncharacterized protein (246 aa).

To M.jannaschii MJ1676.

This is an uncharacterized protein from Methanothermobacter thermautotrophicus (strain ATCC 29096 / DSM 1053 / JCM 10044 / NBRC 100330 / Delta H) (Methanobacterium thermoautotrophicum).